A 1839-amino-acid polypeptide reads, in one-letter code: Adenylate cyclase (1839 aa).

Disordered stretches follow at residues 1-21 (MSSPTDAERVNMRREKHPQIE), 43-87 (ITTH…PRFS), 126-245 (TSLL…PIVS), 272-315 (KNTE…QWTA), 332-388 (KRKA…DSND), and 400-468 (ESSG…SFSK). Residues 165–211 (SQSNESRGTRSSIFFPSTSNSRRGSATSTMTSGSRSSHPPDTPPITS) show a composition bias toward polar residues. The segment covering 212–221 (QQQEQQYDQQ) has biased composition (low complexity). Residues 222 to 233 (RQQRPETREQEQ) show a composition bias toward basic and acidic residues. Positions 332–355 (KRKAKHHHHYHHPQHPRPPHRKHY) are enriched in basic residues. Residues 361–376 (PIEDKAVVEKEQEPPE) are compositionally biased toward basic and acidic residues. Low complexity predominate over residues 407 to 428 (SASTQSVSSFSSGATGASGATG). The region spanning 494–574 (RRYAIRIFNI…LNGYLKSDPL (81 aa)) is the Ras-associating domain. LRR repeat units follow at residues 632–655 (TSDIESLDVSNNANIFLPLDFIES), 659–679 (LSSLRMVNIRASKFPANVTDA), 681–702 (KLVSLDLERNFIKKVPDSIFKL), 704–726 (NLTIVNLQCNNLERLPPGFSKLK), 727–748 (NLQLLDISSNKFVNYPEVINSC), 750–771 (NLLQIDLSYNKIHSLPVSINQL), 773–794 (KLAKMNLFNNRLTSVGDLSQMK), 795–816 (NLRTLNLRCNRVTSIECHAPNL), 817–834 (QNLFLTDNRISTFDDDLT), 835–856 (RLRTLELQQNPITSMVCGGNYM), 858–879 (NMTSLSLNKAKLSSFSAELLSK), 882–903 (RLEKLELNENNLTQLPPEINKL), 905–926 (RLIYLSVARNKLESIPDEISDL), 928–950 (SLKSLDLHSNNLRMLMNNLEDLE), 951–971 (LTSLNVSSNLLTGFHGSPAKF), 982–1004 (SLLFLSVADNNLTDSIWPLVNTF), 1006–1027 (NLKTLNLSYNNFVEISDLKLQN), 1028–1048 (LTELYLSGNNFTSLPGEAVQH), 1051–1073 (SLKVLMLNGNKLLSLPAELSQLS), 1074–1096 (RLSVLDVGSNQLKYNISNYHYDW), 1103–1124 (DLKYLNFSGNKRFEIKSALDPE), and 1135–1160 (LKQLRVLGLMDVTLKTSKVPDESVSI). The 267-residue stretch at 1173–1439 (RYGVADTLGQ…DNITILCVSL (267 aa)) folds into the PPM-type phosphatase domain. Residues 1483 to 1620 (AIVFTDIKNS…PVVNKAARVS (138 aa)) form the Guanylate cyclase domain. 2 residues coordinate Mg(2+): D1488 and D1531.

It belongs to the adenylyl cyclase class-3 family. Mg(2+) serves as cofactor.

The catalysed reaction is ATP = 3',5'-cyclic AMP + diphosphate. Its function is as follows. Plays essential roles in regulation of cellular metabolism by catalyzing the synthesis of a second messenger, cAMP. The polypeptide is Adenylate cyclase (CYR1) (Lachancea kluyveri (Yeast)).